The following is a 74-amino-acid chain: Cytochrome c oxidase subunit 2 (74 aa).

At 1-14 the chain is on the mitochondrial intermembrane side; sequence MAHPSQLGLQDAAS. The helical transmembrane segment at 15 to 45 threads the bilayer; it reads PVMEELLHFHDHALMIVFLISTLVLYIIVAM. Residues 46 to 74 lie on the Mitochondrial matrix side of the membrane; sequence VSTKLTDKYTIDSQEIEIVWTVLPAVILI.

This sequence belongs to the cytochrome c oxidase subunit 2 family. In terms of assembly, component of the cytochrome c oxidase (complex IV, CIV), a multisubunit enzyme composed of 14 subunits. The complex is composed of a catalytic core of 3 subunits MT-CO1, MT-CO2 and MT-CO3, encoded in the mitochondrial DNA, and 11 supernumerary subunits COX4I, COX5A, COX5B, COX6A, COX6B, COX6C, COX7A, COX7B, COX7C, COX8 and NDUFA4, which are encoded in the nuclear genome. The complex exists as a monomer or a dimer and forms supercomplexes (SCs) in the inner mitochondrial membrane with NADH-ubiquinone oxidoreductase (complex I, CI) and ubiquinol-cytochrome c oxidoreductase (cytochrome b-c1 complex, complex III, CIII), resulting in different assemblies (supercomplex SCI(1)III(2)IV(1) and megacomplex MCI(2)III(2)IV(2)). Found in a complex with TMEM177, COA6, COX18, COX20, SCO1 and SCO2. Interacts with TMEM177 in a COX20-dependent manner. Interacts with COX20. Interacts with COX16. Cu cation serves as cofactor.

Its subcellular location is the mitochondrion inner membrane. It catalyses the reaction 4 Fe(II)-[cytochrome c] + O2 + 8 H(+)(in) = 4 Fe(III)-[cytochrome c] + 2 H2O + 4 H(+)(out). In terms of biological role, component of the cytochrome c oxidase, the last enzyme in the mitochondrial electron transport chain which drives oxidative phosphorylation. The respiratory chain contains 3 multisubunit complexes succinate dehydrogenase (complex II, CII), ubiquinol-cytochrome c oxidoreductase (cytochrome b-c1 complex, complex III, CIII) and cytochrome c oxidase (complex IV, CIV), that cooperate to transfer electrons derived from NADH and succinate to molecular oxygen, creating an electrochemical gradient over the inner membrane that drives transmembrane transport and the ATP synthase. Cytochrome c oxidase is the component of the respiratory chain that catalyzes the reduction of oxygen to water. Electrons originating from reduced cytochrome c in the intermembrane space (IMS) are transferred via the dinuclear copper A center (CU(A)) of subunit 2 and heme A of subunit 1 to the active site in subunit 1, a binuclear center (BNC) formed by heme A3 and copper B (CU(B)). The BNC reduces molecular oxygen to 2 water molecules using 4 electrons from cytochrome c in the IMS and 4 protons from the mitochondrial matrix. The polypeptide is Cytochrome c oxidase subunit 2 (mt-co2) (Megalops atlanticus (Tarpon)).